The primary structure comprises 81 residues: U10-myrmicitoxin-Mri1b (81 aa).

Positions 1-26 are cleaved as a signal peptide; that stretch reads MRLSYISLTLAIIFVMAIVHAPETEA. Positions 27-52 are excised as a propeptide; that stretch reads KAYPEADAVAEAIAVGEADAVGVADP. Val-80 is modified (valine amide).

The protein belongs to the formicidae venom precursor-01 superfamily. In terms of tissue distribution, expressed by the venom gland.

It is found in the secreted. Functionally, induces paralysis after injection into blowflies (L.caesar), and then death within 24 hours. May have antimicrobial properties, like most ant linear peptides. This chain is U10-myrmicitoxin-Mri1b, found in Manica rubida (European giant red ant).